Reading from the N-terminus, the 264-residue chain is Thymidylate synthase (264 aa).

Arg-21 serves as a coordination point for dUMP. Residue His-51 coordinates (6R)-5,10-methylene-5,6,7,8-tetrahydrofolate. 126 to 127 lines the dUMP pocket; it reads RR. Cys-146 acts as the Nucleophile in catalysis. DUMP-binding positions include 166–169, Asn-177, and 207–209; these read RSGD and HLY. Asp-169 lines the (6R)-5,10-methylene-5,6,7,8-tetrahydrofolate pocket. Ala-263 serves as a coordination point for (6R)-5,10-methylene-5,6,7,8-tetrahydrofolate.

This sequence belongs to the thymidylate synthase family. Bacterial-type ThyA subfamily. As to quaternary structure, homodimer.

Its subcellular location is the cytoplasm. The enzyme catalyses dUMP + (6R)-5,10-methylene-5,6,7,8-tetrahydrofolate = 7,8-dihydrofolate + dTMP. It functions in the pathway pyrimidine metabolism; dTTP biosynthesis. In terms of biological role, catalyzes the reductive methylation of 2'-deoxyuridine-5'-monophosphate (dUMP) to 2'-deoxythymidine-5'-monophosphate (dTMP) while utilizing 5,10-methylenetetrahydrofolate (mTHF) as the methyl donor and reductant in the reaction, yielding dihydrofolate (DHF) as a by-product. This enzymatic reaction provides an intracellular de novo source of dTMP, an essential precursor for DNA biosynthesis. The chain is Thymidylate synthase from Xanthomonas oryzae pv. oryzae (strain MAFF 311018).